Reading from the N-terminus, the 228-residue chain is UPF0758 protein CLK_2387 (228 aa).

Residues 106-228 (KISTPLDVSN…YVSMKEKGTI (123 aa)) enclose the MPN domain. 3 residues coordinate Zn(2+): H177, H179, and D190. The JAMM motif motif lies at 177–190 (HNHPSGDPTPSKED).

This sequence belongs to the UPF0758 family.

The protein is UPF0758 protein CLK_2387 of Clostridium botulinum (strain Loch Maree / Type A3).